Reading from the N-terminus, the 259-residue chain is Ribosomal RNA small subunit methyltransferase J (259 aa).

S-adenosyl-L-methionine-binding positions include 101–102, 117–118, 153–154, and D176; these read RD, ER, and SS.

This sequence belongs to the methyltransferase superfamily. RsmJ family.

The protein resides in the cytoplasm. It catalyses the reaction guanosine(1516) in 16S rRNA + S-adenosyl-L-methionine = N(2)-methylguanosine(1516) in 16S rRNA + S-adenosyl-L-homocysteine + H(+). Its function is as follows. Specifically methylates the guanosine in position 1516 of 16S rRNA. The polypeptide is Ribosomal RNA small subunit methyltransferase J (Vibrio vulnificus (strain CMCP6)).